The sequence spans 451 residues: UDP-glycosyltransferase 13 (451 aa).

H15 serves as the catalytic Proton acceptor. H15 is an an anthocyanidin binding site. The Charge relay role is filled by D93. UDP-alpha-D-glucose contacts are provided by A326, Q328, H343, W346, N347, S348, and E351. A366 contributes to the an anthocyanidin binding site. Positions 367 and 368 each coordinate UDP-alpha-D-glucose.

This sequence belongs to the UDP-glycosyltransferase family. As to expression, expressed in roots. Detected in stems and leaves.

The enzyme catalyses a 7-hydroxyisoflavone + UDP-alpha-D-glucose = a 7-hydroxyisoflavone 7-O-beta-D-glucoside + UDP + H(+). Its function is as follows. Isoflavone 7-O-glucosyltransferase converting daidzein to daidzin, genistein to genistin and formononetin to ononin. Shows some activity toward the flavanones liquiritigenin and naringenin, but not toward cyanidin, isoliquiritigenin, apigenin, luteolin, kaempferol, quercetin, daidzin and puerarin. This is UDP-glycosyltransferase 13 from Pueraria montana var. lobata (Kudzu vine).